The primary structure comprises 226 residues: Fibronectin type III domain-containing protein 9 (226 aa).

The region spanning 1–101 is the Fibronectin type-III domain; sequence MNIEVGNVSH…FHTLDKSPLA (101 aa). A helical transmembrane segment spans residues 113 to 133; the sequence is LWVLMAILLACFTAVLAFICL.

The protein localises to the membrane. This chain is Fibronectin type III domain-containing protein 9 (Fndc9), found in Mus musculus (Mouse).